The primary structure comprises 103 residues: Large ribosomal subunit protein uL24 (103 aa).

The protein belongs to the universal ribosomal protein uL24 family. In terms of assembly, part of the 50S ribosomal subunit.

One of two assembly initiator proteins, it binds directly to the 5'-end of the 23S rRNA, where it nucleates assembly of the 50S subunit. Functionally, one of the proteins that surrounds the polypeptide exit tunnel on the outside of the subunit. The polypeptide is Large ribosomal subunit protein uL24 (Halalkalibacterium halodurans (strain ATCC BAA-125 / DSM 18197 / FERM 7344 / JCM 9153 / C-125) (Bacillus halodurans)).